Reading from the N-terminus, the 510-residue chain is MTATPKPLVLIILDGFGHSESHEGNAILAAKMPVMDRLYETMPNGLISGSGMDVGLPDGQMGNSEVGHMNLGAGRVVYQDFTRVTKAIRDGEFFENPTICAAVDKAVGAGKAVHIMGLLSDGGVHSHQGHLVAMAELAVKRGAEKIYLHAFLDGRDTPPRSAKKSLELMDATFARLGKGRTATIIGRYFAMDRDNRWDRVSTAYNLIVDSTAEFHADSGVAGLEAAYARDENDEFVKATRIGEPARVEDGDAVVFMNFRADRARELTRVFVEDDFKDFERARQPKVNYVMLTQYAASIPAPSAFAAGSLKNVLGEYLADNGKTQLRIAETEKYAHVTFFFSGGREEPFPGEERILIPSPKVATYDLQPEMSAPEVTDKIVDAIEHQRYDVIIVNYANGDMVGHSGIMEAAIKAVECLDVCVGRITAALEKVGGEALITADHGNVEQMTDDSTGQAHTAHTSEPVPFVYVGKRPLKVREGGVLADVAPTMLHLLGMEKPQEMTGHSILVAK.

The Mn(2+) site is built by aspartate 14 and serine 64. The active-site Phosphoserine intermediate is serine 64. Residues histidine 125, 155–156 (RD), arginine 187, arginine 193, 259–262 (RADR), and lysine 332 contribute to the substrate site. Mn(2+) is bound by residues aspartate 399, histidine 403, aspartate 440, histidine 441, and histidine 459.

It belongs to the BPG-independent phosphoglycerate mutase family. Monomer. Mn(2+) serves as cofactor.

It catalyses the reaction (2R)-2-phosphoglycerate = (2R)-3-phosphoglycerate. It participates in carbohydrate degradation; glycolysis; pyruvate from D-glyceraldehyde 3-phosphate: step 3/5. In terms of biological role, catalyzes the interconversion of 2-phosphoglycerate and 3-phosphoglycerate. In Pseudomonas savastanoi pv. phaseolicola (strain 1448A / Race 6) (Pseudomonas syringae pv. phaseolicola (strain 1448A / Race 6)), this protein is 2,3-bisphosphoglycerate-independent phosphoglycerate mutase.